The primary structure comprises 1196 residues: DNA-directed RNA polymerase subunit beta (1196 aa).

The protein belongs to the RNA polymerase beta chain family. As to quaternary structure, the RNAP catalytic core consists of 2 alpha, 1 beta, 1 beta' and 1 omega subunit. When a sigma factor is associated with the core the holoenzyme is formed, which can initiate transcription.

The catalysed reaction is RNA(n) + a ribonucleoside 5'-triphosphate = RNA(n+1) + diphosphate. Its function is as follows. DNA-dependent RNA polymerase catalyzes the transcription of DNA into RNA using the four ribonucleoside triphosphates as substrates. This Lactococcus lactis subsp. cremoris (strain MG1363) protein is DNA-directed RNA polymerase subunit beta.